A 90-amino-acid polypeptide reads, in one-letter code: Small ribosomal subunit protein uS15 (90 aa).

Belongs to the universal ribosomal protein uS15 family. In terms of assembly, part of the 30S ribosomal subunit. Forms a bridge to the 50S subunit in the 70S ribosome, contacting the 23S rRNA.

One of the primary rRNA binding proteins, it binds directly to 16S rRNA where it helps nucleate assembly of the platform of the 30S subunit by binding and bridging several RNA helices of the 16S rRNA. In terms of biological role, forms an intersubunit bridge (bridge B4) with the 23S rRNA of the 50S subunit in the ribosome. The chain is Small ribosomal subunit protein uS15 from Aquifex aeolicus (strain VF5).